Consider the following 422-residue polypeptide: Exodeoxyribonuclease 7 large subunit (422 aa).

Belongs to the XseA family. In terms of assembly, heterooligomer composed of large and small subunits.

It is found in the cytoplasm. The catalysed reaction is Exonucleolytic cleavage in either 5'- to 3'- or 3'- to 5'-direction to yield nucleoside 5'-phosphates.. In terms of biological role, bidirectionally degrades single-stranded DNA into large acid-insoluble oligonucleotides, which are then degraded further into small acid-soluble oligonucleotides. This Leptospira interrogans serogroup Icterohaemorrhagiae serovar copenhageni (strain Fiocruz L1-130) protein is Exodeoxyribonuclease 7 large subunit.